The primary structure comprises 571 residues: Urease subunit alpha (571 aa).

One can recognise a Urease domain in the interval 133 to 571 (GGIDTHVHFI…LPLTQRYFLF (439 aa)). Residues H138, H140, and K221 each contribute to the Ni(2+) site. Position 221 is an N6-carboxylysine (K221). Position 223 (H223) interacts with substrate. Ni(2+) contacts are provided by H250 and H276. The active-site Proton donor is H324. D364 is a binding site for Ni(2+).

This sequence belongs to the metallo-dependent hydrolases superfamily. Urease alpha subunit family. Heterotrimer of UreA (gamma), UreB (beta) and UreC (alpha) subunits. Three heterotrimers associate to form the active enzyme. It depends on Ni cation as a cofactor. Post-translationally, carboxylation allows a single lysine to coordinate two nickel ions.

It is found in the cytoplasm. It carries out the reaction urea + 2 H2O + H(+) = hydrogencarbonate + 2 NH4(+). It participates in nitrogen metabolism; urea degradation; CO(2) and NH(3) from urea (urease route): step 1/1. The sequence is that of Urease subunit alpha from Staphylococcus saprophyticus subsp. saprophyticus (strain ATCC 15305 / DSM 20229 / NCIMB 8711 / NCTC 7292 / S-41).